Reading from the N-terminus, the 568-residue chain is Natural resistance-associated macrophage protein 2 (568 aa).

A compositionally biased stretch (basic and acidic residues) spans 1–20 (MVLDPEEKIPDDGASGDHGD). Residues 1–45 (MVLDPEEKIPDDGASGDHGDSASLGAINPAYSNSSLPHSTGDSEE) are disordered. The Cytoplasmic segment spans residues 1–69 (MVLDPEEKIP…EEYSCFSFRK (69 aa)). Positions 30–40 (AYSNSSLPHST) are enriched in polar residues. Residues 70-90 (LWAFTGPGFLMSIAYLDPGNI) traverse the membrane as a helical segment. Residues 91–95 (ESDLQ) lie on the Extracellular side of the membrane. Residues 96–117 (SGAVAGFKLLWVLLLATIVGLL) form a helical membrane-spanning segment. Residues 118 to 154 (LQRLAARLGVVTGLHLAEVCHRQYPKVPRIILWLMVE) are Cytoplasmic-facing. A helical transmembrane segment spans residues 155-175 (LAIIGSDMQEVIGSAIAINLL). The Extracellular segment spans residues 176 to 179 (SAGR). Residues 180-194 (VPLYGGVLITIADTF) form a helical membrane-spanning segment. Residues 195–208 (VFLFLDKYGLRKLE) are Cytoplasmic-facing. Residues 209–229 (AFFGFLITIMALTFGYEYVTV) form a helical membrane-spanning segment. The Extracellular portion of the chain corresponds to 230–255 (KPSQSQVLRGMFVPSCSGCHTPQVEQ). A helical membrane pass occupies residues 256–276 (AVGIVGAVIMPHNMYLHSALV). Topologically, residues 277 to 301 (KSRQVNRANKQEVREANKYFFIESC) are cytoplasmic. A helical membrane pass occupies residues 302–322 (IALFVSFIINVFVVSVFAEAF). At 323–360 (FEKTNEQVVEVCRNSSSPHADLFPNDNSTLAVDIYKGG) the chain is on the extracellular side. Residues N336 and N349 are each glycosylated (N-linked (GlcNAc...) asparagine). Residues 361 to 381 (VVLGCYFGPAALYIWAVGILA) form a helical membrane-spanning segment. Topologically, residues 382–408 (AGQSSTMTGTYSGQFVMEGFLNLKWSR) are cytoplasmic. A helical transmembrane segment spans residues 409–429 (FARVILTRSIAIIPTLLVAVF). Topologically, residues 430–440 (QDVEHLTGMND) are extracellular. The helical transmembrane segment at 441–461 (FLNVLQSLQLPFALIPILTFT) threads the bilayer. The Cytoplasmic segment spans residues 462–482 (SLRPVMSEFSNGIGWRIAGGI). Residues 483–503 (LVLLVCSINMYFVVVYVQELG) form a helical membrane-spanning segment. At 504 to 506 (HVA) the chain is on the extracellular side. Residues 507-527 (LYVVAAVVSVAYLGFVFYLGW) traverse the membrane as a helical segment. Over 528–568 (QCLIALGLSFLDCGRSYHLGLTARPEIYLLNTVDAVSLVSR) the chain is Cytoplasmic. Residues 555 to 559 (YLLNT) form a required for early endosome targeting region. Phosphoserine occurs at positions 556, 564, and 567.

Belongs to the NRAMP family. Forms a complex with NDFIP1 and NEDD4L, in cortical neurons, in response to iron and cobalt exposure; this interaction leads to SLC11A2 ubiquitination by NEDD4L and proteasome-dependent degradation. Interacts with NDFIP1, NDFIP2 and WWP2; this interaction leads to SLC11A2 ubiquitination by WWP2 and subsequent proteasome-dependent degradation. Interacts with COX2 and TOM6 at the outer mitochondrion membrane. Interacts with ARRDC1; this interaction regulates the incorporation of SLC11A2 into extracellular vesicles through an ubiquitination-dependent mechanism. Interacts with ARRDC4; controls the incorporation of SLC11A2 into extracellular vesicles through an ubiquitination-dependent mechanism. In terms of processing, ubiquitinated by WWP2. N-glycosylated. Ubiquitous. As to expression, expressed in proximal intestine, kidney and brain.

Its subcellular location is the golgi apparatus. It is found in the trans-Golgi network membrane. It localises to the early endosome membrane. The protein localises to the recycling endosome membrane. The protein resides in the late endosome membrane. Its subcellular location is the lysosome membrane. It is found in the apical cell membrane. It localises to the mitochondrion outer membrane. The protein localises to the extracellular vesicle membrane. It catalyses the reaction Fe(2+)(in) + H(+)(in) = Fe(2+)(out) + H(+)(out). The catalysed reaction is Cd(2+)(out) + H(+)(out) = Cd(2+)(in) + H(+)(in). It carries out the reaction Co(2+)(out) + H(+)(out) = Co(2+)(in) + H(+)(in). The enzyme catalyses Mn(2+)(in) + H(+)(in) = Mn(2+)(out) + H(+)(out). It catalyses the reaction Zn(2+)(out) + H(+)(out) = Zn(2+)(in) + H(+)(in). The catalysed reaction is Ni(2+)(out) + H(+)(out) = Ni(2+)(in) + H(+)(in). It carries out the reaction H(+)(in) = H(+)(out). The enzyme catalyses Fe(2+)(in) = Fe(2+)(out). Its activity is regulated as follows. Inhibited by 2-(3-carbamimidoylsulfanylmethyl-benzyl)-isothiourea. Its function is as follows. Proton-coupled metal ion symporter operating with a proton to metal ion stoichiometry of 1:1. Selectively transports various divalent metal cations, in decreasing affinity: Cd(2+) &gt; Fe(2+) &gt; Co(2+), Mn(2+) &gt;&gt; Zn(2+), Ni(2+), VO(2+). Essential for maintenance of iron homeostasis by modulating intestinal absorption of dietary Fe(2+) and TF-associated endosomal Fe(2+) transport in erythroid precursors and other cells. Enables Fe(2+) and Mn(2+) ion entry into mitochondria, and is thus expected to promote mitochondrial heme synthesis, iron-sulfur cluster biogenesis and antioxidant defense. Can mediate uncoupled fluxes of either protons or metal ions. The sequence is that of Natural resistance-associated macrophage protein 2 (Slc11a2) from Rattus norvegicus (Rat).